The chain runs to 257 residues: Homeobox protein EMX1 (257 aa).

Residues 159 to 218 constitute a DNA-binding region (homeobox); that stretch reads PKRIRTAFSPSQLLRLERAFEKNHYVVGAERKQLAGSLSLSETQVKVWFQNRRTKYKRQK. The tract at residues 216–257 is disordered; it reads RQKLEEEGPESEQKKKGSHHINRWRIATKQANGEDIDVTSND. Residues 217–230 are compositionally biased toward basic and acidic residues; sequence QKLEEEGPESEQKK.

The protein belongs to the EMX homeobox family. Interacts with WRD11 (via the N-terminal and the central portion of the protein); the interaction associates EMX1 with GLI3. As to expression, cerebral cortex. Expressed in the olfactory bulbs.

It is found in the nucleus. Functionally, transcription factor, which in cooperation with EMX2, acts to generate the boundary between the roof and archipallium in the developing brain. May function in combinations with OTX1/2 to specify cell fates in the developing central nervous system. This is Homeobox protein EMX1 (Emx1) from Mus musculus (Mouse).